Reading from the N-terminus, the 217-residue chain is uncharacterized protein (217 aa).

Residues V26–A48 traverse the membrane as a helical segment.

It is found in the membrane. This is an uncharacterized protein from Archaeoglobus fulgidus (strain ATCC 49558 / DSM 4304 / JCM 9628 / NBRC 100126 / VC-16).